The sequence spans 88 residues: MANTTSAKKATRKIARRTIVNKSRRTQMRGAVRIVEEAIASGDRDAALKAMIRAEPELMQAAQRNIVHKNTASRKVSRLSHQIAKLAK.

This sequence belongs to the bacterial ribosomal protein bS20 family.

Functionally, binds directly to 16S ribosomal RNA. The chain is Small ribosomal subunit protein bS20 from Rhodopseudomonas palustris (strain BisB18).